The chain runs to 755 residues: uncharacterized protein (755 aa).

Helical transmembrane passes span 46–66, 70–90, 93–113, 118–138, 143–163, 411–431, 446–466, 482–502, and 514–534; these read LGLGVGLASQLILLADMGGLY, LKTIFGAWVGAAIAMAVGTIV, GWGLGLAITGFVLFASGYLAV, GAMVGIVTTFAFLLGAQNVST, FTSLAIGGMWSLILAIFIWPF, IAHLTQIPYGFWIVITLIFVL, LLGTFLGVLVMSIALKLIQDP, ALLRFHYSVAVFFITAFALIL, and ALLSRLVCTLIGSAIALGLAF.

This sequence belongs to the YccS/YhfK family.

It is found in the cell membrane. This is an uncharacterized protein from Synechocystis sp. (strain ATCC 27184 / PCC 6803 / Kazusa).